A 358-amino-acid polypeptide reads, in one-letter code: Peptide chain release factor 1 (358 aa).

Gln233 carries the post-translational modification N5-methylglutamine.

The protein belongs to the prokaryotic/mitochondrial release factor family. In terms of processing, methylated by PrmC. Methylation increases the termination efficiency of RF1.

It is found in the cytoplasm. Functionally, peptide chain release factor 1 directs the termination of translation in response to the peptide chain termination codons UAG and UAA. The protein is Peptide chain release factor 1 of Geobacillus kaustophilus (strain HTA426).